We begin with the raw amino-acid sequence, 734 residues long: Ribosomal RNA large subunit methyltransferase K/L (734 aa).

One can recognise a THUMP domain in the interval histidine 49–leucine 167.

The protein belongs to the methyltransferase superfamily. RlmKL family.

The protein resides in the cytoplasm. It carries out the reaction guanosine(2445) in 23S rRNA + S-adenosyl-L-methionine = N(2)-methylguanosine(2445) in 23S rRNA + S-adenosyl-L-homocysteine + H(+). The enzyme catalyses guanosine(2069) in 23S rRNA + S-adenosyl-L-methionine = N(2)-methylguanosine(2069) in 23S rRNA + S-adenosyl-L-homocysteine + H(+). Specifically methylates the guanine in position 2445 (m2G2445) and the guanine in position 2069 (m7G2069) of 23S rRNA. In Acinetobacter baumannii (strain AYE), this protein is Ribosomal RNA large subunit methyltransferase K/L.